Here is a 275-residue protein sequence, read N- to C-terminus: Beta-lactamase OXA-3 (275 aa).

A signal peptide spans 1 to 21; it reads MAIRIFAILFSTFVFGTFAHA. S72 acts as the Acyl-ester intermediate in catalysis. At K75 the chain carries N6-carboxylysine. Substrate is bound at residue 210–212; the sequence is KTG.

Belongs to the class-D beta-lactamase family.

The enzyme catalyses a beta-lactam + H2O = a substituted beta-amino acid. This is an oxacillin-hydrolyzing beta-lactamase. The protein is Beta-lactamase OXA-3 (bla) of Pseudomonas aeruginosa.